A 293-amino-acid polypeptide reads, in one-letter code: Putative DNA glycosylase At3g47830 (293 aa).

Over residues 1-10 (MSKAQKRKRL) the composition is skewed to basic residues. The segment at 1 to 34 (MSKAQKRKRLNKYDGESKTPANKSTVDGGNPYPT) is disordered. Residues Asn108 and Lys151 each coordinate DNA. Lys196 (schiff-base intermediate with DNA) is an active-site residue. Positions 216 and 232 each coordinate DNA.

Belongs to the DNA glycosylase family.

In Arabidopsis thaliana (Mouse-ear cress), this protein is Putative DNA glycosylase At3g47830.